The chain runs to 154 residues: Homeobox protein engrailed (154 aa).

Positions 37–96 (EKRPRTAFSASQLQRLKQEFQQSNYLTEQRRRSLAKELTLSESQIKIWFQNKRAKIKKAS) form a DNA-binding region, homeobox. The interval 127–154 (KLLNGQNTSGDCSRSDYTSDSDGDSLTH) is disordered. The span at 129 to 144 (LNGQNTSGDCSRSDYT) shows a compositional bias: polar residues. The segment covering 145-154 (SDSDGDSLTH) has biased composition (acidic residues).

The protein belongs to the engrailed homeobox family.

The protein resides in the nucleus. The polypeptide is Homeobox protein engrailed (EN) (Tripneustes gratilla (Hawaian sea urchin)).